Reading from the N-terminus, the 505-residue chain is COMPASS component BRE2 (505 aa).

One can recognise a B30.2/SPRY domain in the interval 70-295 (SANPFFTILG…LKQETTNKEF (226 aa)). Ser-227 carries the post-translational modification Phosphoserine. The tract at residues 271 to 290 (EPWREDAENGPSRKKLKQET) is disordered. Position 318 (Lys-318) interacts with DNA. Residues 398–420 (RDESNDKNTTSAKKKKQQQKKKK) form a disordered region. The segment covering 409-420 (AKKKKQQQKKKK) has biased composition (basic residues).

The protein belongs to the cclA family. Component of the Set1C/COMPASS complex which consists of SET1(2), BRE2(2), SPP1(2), SDC1(1), SHG1(1), SWD1(1), SWD2(1), and SWD3(1). Interacts directly with SDC1.

It localises to the nucleus. Its subcellular location is the chromosome. The protein resides in the telomere. Functionally, component of the Set1C/COMPASS complex that specifically mono-, di- and trimethylates histone H3 to form H3K4me1/2/3, which subsequently plays a role in telomere length maintenance and transcription elongation regulation. COMPASS recognizes ubiquitinated H2B on one face of the nucleosome which stimulates the methylation of H3 on the opposing face. This chain is COMPASS component BRE2, found in Saccharomyces cerevisiae (strain ATCC 204508 / S288c) (Baker's yeast).